Consider the following 541-residue polypeptide: MITSQDRVIIFDTTLRDGEQSPGATLNIDEKLTIARQLSLLGVDVIEAGFPYASIGDFEAVQKIAEIVGVEGGPTICGLARTTRADIEAAGKALKPAAKARIHTFIATSDIHLAYKLKKTRAEVLEIASEMVAYAKTFVDDVEFSPEDAGRSDPEFLYQVLEKAIAAGATTVNIPDTVGYTTPAEFGGLIRGIKENVPNIDQAIISVHGHNDLGLAVANFLEAVKNGARQLECTINGIGERAGNAALEELVMAFHVRRQYFNPFFGRPPESETPLTNINTRHIYKTSRLVSSLTGMFVQPNKAIVGANAFAHESGIHQDGVLKNKLTYEIMDAQSIGLTDNQIVLGKLSGRHAFQSRLQELGFKLSDEEINKAFIKFKDLADKKKEITDWDLESIVNAEIQQPPELFRLELVQVSCGDRSRPTATVIIRTPNGEELTDAAIGTGPVDAVYKAINRVVNVENDLVEFSVQSVTAGIDAIGEVTIRVRHEGRVYSGHAANTDIIVASAEAYLSALNRLYAVLQRGVEKINLPKDQPTEVVAGS.

The region spanning 8–284 (VIIFDTTLRD…LTNINTRHIY (277 aa)) is the Pyruvate carboxyltransferase domain. Positions 17, 208, 210, and 244 each coordinate Mn(2+). Residues 408 to 541 (RLELVQVSCG…DQPTEVVAGS (134 aa)) form a regulatory domain region.

This sequence belongs to the alpha-IPM synthase/homocitrate synthase family. LeuA type 1 subfamily. In terms of assembly, homodimer. Mn(2+) is required as a cofactor.

It localises to the cytoplasm. The catalysed reaction is 3-methyl-2-oxobutanoate + acetyl-CoA + H2O = (2S)-2-isopropylmalate + CoA + H(+). It participates in amino-acid biosynthesis; L-leucine biosynthesis; L-leucine from 3-methyl-2-oxobutanoate: step 1/4. In terms of biological role, catalyzes the condensation of the acetyl group of acetyl-CoA with 3-methyl-2-oxobutanoate (2-ketoisovalerate) to form 3-carboxy-3-hydroxy-4-methylpentanoate (2-isopropylmalate). The chain is 2-isopropylmalate synthase from Trichodesmium erythraeum (strain IMS101).